A 237-amino-acid chain; its full sequence is tRNA (guanine-N(7)-)-methyltransferase (237 aa).

Positions 68, 93, 120, and 143 each coordinate S-adenosyl-L-methionine. Asp143 is an active-site residue. Substrate-binding positions include Lys147, Asp179, and 216–219; that span reads TKFE.

It belongs to the class I-like SAM-binding methyltransferase superfamily. TrmB family.

It carries out the reaction guanosine(46) in tRNA + S-adenosyl-L-methionine = N(7)-methylguanosine(46) in tRNA + S-adenosyl-L-homocysteine. It participates in tRNA modification; N(7)-methylguanine-tRNA biosynthesis. Catalyzes the formation of N(7)-methylguanine at position 46 (m7G46) in tRNA. In Shewanella piezotolerans (strain WP3 / JCM 13877), this protein is tRNA (guanine-N(7)-)-methyltransferase.